A 384-amino-acid polypeptide reads, in one-letter code: MAPRAGQRGLWSPLPGLLLLAAALSRPAAPCPFQCYCFGSPRLMLRCASGAELRQPPRDVPPDARNLTIVGANLTVLRAAAFAGGGEGATDGVRLPLLTALRLTHNNIEVVEDGAFDGLPSLAALDLSHNPLRALGYRAFRGLPALRSLQLNHALARGSPGMLDALDAALAPLAELRLLGLVGNALSRLPLAALRLPRLEQLDARVNALAGLGPDELSALERDGDLPQPRLLLADNPLSCGCTSRPLLAWLHNATERVPDARRLRCASPRVLLDRPLIDLDEARLGCSDGDAHESGEGIDVAGPELEASYVFFGLVLALIGLIFLMVLYLNRRGIQRWMHNLREACRDQMEGYHYRYEQDADPRRAPAPAAPAGSRATSPGSGL.

Residues 1–30 (MAPRAGQRGLWSPLPGLLLLAAALSRPAAP) form the signal peptide. 2 disulfide bridges follow: cysteine 31/cysteine 37 and cysteine 35/cysteine 47. The Extracellular portion of the chain corresponds to 31–309 (CPFQCYCFGS…DVAGPELEAS (279 aa)). LRR repeat units follow at residues 61–84 (PPDARNLTIVGANLTVLRAAAFAG), 95–118 (LPLLTALRLTHNNIEVVEDGAFDG), 119–142 (LPSLAALDLSHNPLRALGYRAFRG), 173–196 (LAELRLLGLVGNALSRLPLAALRL), and 198–219 (RLEQLDARVNALAGLGPDELSA). A glycan (N-linked (GlcNAc...) asparagine) is linked at asparagine 66. 2 disulfide bridges follow: cysteine 240–cysteine 266 and cysteine 242–cysteine 287. Residues 310–330 (YVFFGLVLALIGLIFLMVLYL) form a helical membrane-spanning segment. Topologically, residues 331-384 (NRRGIQRWMHNLREACRDQMEGYHYRYEQDADPRRAPAPAAPAGSRATSPGSGL) are cytoplasmic. A disordered region spans residues 361–384 (ADPRRAPAPAAPAGSRATSPGSGL). The segment covering 367–384 (PAPAAPAGSRATSPGSGL) has biased composition (low complexity).

It is found in the membrane. The sequence is that of Trophoblast glycoprotein-like (Tpbgl) from Mus musculus (Mouse).